An 875-amino-acid polypeptide reads, in one-letter code: Cell surface glycoprotein (875 aa).

A signal peptide spans Met-1 to Ala-23. Over residues Glu-137–Gly-157 the composition is skewed to polar residues. Disordered stretches follow at residues Glu-137–Pro-158 and Leu-197–Val-217. A compositionally biased stretch (low complexity) spans Asp-205–Asp-216. N-linked (GlcNAc...) asparagine glycosylation occurs at Asn-253. The disordered stretch occupies residues Tyr-380–Glu-414. The span at Ser-383–Val-402 shows a compositional bias: polar residues. 4 N-linked (GlcNAc...) asparagine glycosylation sites follow: Asn-455, Asn-563, Asn-715, and Asn-774. Residues Glu-794–Pro-852 form a disordered region. A compositionally biased stretch (acidic residues) spans Ser-797–Thr-846. A helical transmembrane segment spans residues Gly-851–Asn-875. The PGF sorting signal motif lies at Pro-852 to Phe-854.

Belongs to the halobacterial S-layer protein family. Post-translationally, asn-455 is glycosylated by a pentasaccharide comprising a hexose, 2 hexuronic acids, a methyl ester of a hexuronic acid and a final hexose. The complete pentasaccharide is first assembled on dolichol phosphate and then transferred the glycan to the target Asn. Cleaved by the archaeosortase ArtA at the C-terminus, with removal of a short hydrophobic segment. In terms of processing, lipidation.

It localises to the secreted. It is found in the cell wall. The protein localises to the S-layer. Its subcellular location is the cell membrane. Its function is as follows. S-layer protein. The S-layer is a paracrystalline mono-layered assembly of proteins which coat the surface of the cell. The sequence is that of Cell surface glycoprotein (csg1) from Haloarcula marismortui (strain ATCC 43049 / DSM 3752 / JCM 8966 / VKM B-1809) (Halobacterium marismortui).